The sequence spans 202 residues: NADH-ubiquinone oxidoreductase chain 6 (202 aa).

5 consecutive transmembrane segments (helical) span residues 1-21 (MVTM…IMVI), 29-49 (SVFW…LLGV), 52-72 (IALM…LFVI), 96-116 (VPIG…SWLI), and 156-176 (YYLF…AIVL).

This sequence belongs to the complex I subunit 6 family.

It localises to the mitochondrion membrane. It catalyses the reaction a ubiquinone + NADH + 5 H(+)(in) = a ubiquinol + NAD(+) + 4 H(+)(out). Core subunit of the mitochondrial membrane respiratory chain NADH dehydrogenase (Complex I) that is believed to belong to the minimal assembly required for catalysis. Complex I functions in the transfer of electrons from NADH to the respiratory chain. The immediate electron acceptor for the enzyme is believed to be ubiquinone. This chain is NADH-ubiquinone oxidoreductase chain 6 (ND6), found in Metridium senile (Brown sea anemone).